The chain runs to 160 residues: Cytochrome b6-f complex subunit 4 (160 aa).

3 consecutive transmembrane segments (helical) span residues 36-56, 95-115, and 131-151; these read LLYIFPVVILGTIACNVGLAI, LLGVLLMVSVPSGLLTVPFLE, and TVFLIGTVVALWLGIGATLPI.

The protein belongs to the cytochrome b family. PetD subfamily. In terms of assembly, the 4 large subunits of the cytochrome b6-f complex are cytochrome b6, subunit IV (17 kDa polypeptide, petD), cytochrome f and the Rieske protein, while the 4 small subunits are petG, petL, petM and petN. The complex functions as a dimer.

It is found in the plastid. Its subcellular location is the chloroplast thylakoid membrane. Its function is as follows. Component of the cytochrome b6-f complex, which mediates electron transfer between photosystem II (PSII) and photosystem I (PSI), cyclic electron flow around PSI, and state transitions. The sequence is that of Cytochrome b6-f complex subunit 4 from Oenothera elata subsp. hookeri (Hooker's evening primrose).